The following is a 311-amino-acid chain: Avirulence protein ATR1 (311 aa).

A signal peptide spans M1–A15. A RxLR-dEER motif is present at residues R48 to R62. WY domain stretches follow at residues D127 to V209 and E210 to V311.

It belongs to the RxLR effector family. In terms of assembly, monomer. Interacts with defense protein RPP1 from several ecotypes including RPP1-NdA, RPP1-WsB, RPP1-EstA and RPP1-ZdrA, via their leucine-rich repeats (LLRs).

The protein localises to the secreted. The protein resides in the host cytoplasm. Functionally, secreted effector that acts as an elicitor of hypersensitive response (HR) specifically on plants carrying both defense protein RPP1 from several ecotypes including RPP1-NdA, RPP1-WsB, RPP1-EstA and RPP1-ZdrA. The protein is Avirulence protein ATR1 of Hyaloperonospora arabidopsidis (strain Emoy2) (Downy mildew agent).